The primary structure comprises 400 residues: Large envelope protein (400 aa).

M1 carries the N-acetylmethionine modification. 2 disordered regions span residues 1 to 20 (MGGWSSKPRKGMGTNLSVPN) and 89 to 115 (STIPPPASTNRQSGRQPTPISPPLRDS). Residue G2 is the site of N-myristoyl glycine; by host attachment. Positions 2–119 (GGWSSKPRKG…PPLRDSHPQA (118 aa)) are pre-S1. Positions 2 to 174 (GGWSSKPRKG…SARTGDPVTN (173 aa)) are pre-S. At 2–181 (GGWSSKPRKG…VTNMENITSG (180 aa)) the chain is on the virion surface; in external conformation side. At 2–253 (GGWSSKPRKG…PGYRWMCLRR (252 aa)) the chain is on the intravirion; in internal conformation side. The N-linked (GlcNAc...) asparagine glycan is linked to W4. Residues 89 to 106 (STIPPPASTNRQSGRQPT) are compositionally biased toward polar residues. The segment at 120-174 (MQWNSTAFHQTLQDPRVRGLYLPAGGSSSGTVNPAPNIASHISSISARTGDPVTN) is pre-S2. Residues 182-202 (FLGPLLVLQAGFFLLTRILTI) traverse the membrane as a helical segment. The Intravirion; in external conformation portion of the chain corresponds to 203–253 (PQSLDSWWTSLNFLGGSPVCLGQNSQSPTSNHSPTSCPPICPGYRWMCLRR). A helical membrane pass occupies residues 254–274 (FIIFLFILLLCLIFLLVLLDY). Residues 275-348 (QGMLPVCPLI…WASVRFSWLS (74 aa)) are Virion surface-facing. Residue N320 is glycosylated (N-linked (GlcNAc...) asparagine; by host; partial). A helical membrane pass occupies residues 349–369 (LLVPFVQWFVGLSPTVWLSAI). The Intravirion segment spans residues 370–375 (WMMWYW). A helical membrane pass occupies residues 376–398 (GPSLYSIVSPFIPLLPIFFCLWV). Over 399-400 (YI) the chain is Virion surface.

This sequence belongs to the orthohepadnavirus major surface antigen family. As to quaternary structure, in its internal form (Li-HBsAg), interacts with the capsid protein and with the isoform S. Interacts with host chaperone CANX. Associates with host chaperone CANX through its pre-S2 N glycan; this association may be essential for isoform M proper secretion. In terms of assembly, interacts with isoform L. Interacts with the antigens of satellite virus HDV (HDVAgs); this interaction is required for encapsidation of HDV genomic RNA. Post-translationally, isoform M is N-terminally acetylated by host at a ratio of 90%, and N-glycosylated by host at the pre-S2 region. Myristoylated.

It is found in the virion membrane. Functionally, the large envelope protein exists in two topological conformations, one which is termed 'external' or Le-HBsAg and the other 'internal' or Li-HBsAg. In its external conformation the protein attaches the virus to cell receptors and thereby initiating infection. This interaction determines the species specificity and liver tropism. This attachment induces virion internalization predominantly through caveolin-mediated endocytosis. The large envelope protein also assures fusion between virion membrane and endosomal membrane. In its internal conformation the protein plays a role in virion morphogenesis and mediates the contact with the nucleocapsid like a matrix protein. Its function is as follows. The middle envelope protein plays an important role in the budding of the virion. It is involved in the induction of budding in a nucleocapsid independent way. In this process the majority of envelope proteins bud to form subviral lipoprotein particles of 22 nm of diameter that do not contain a nucleocapsid. The sequence is that of Large envelope protein from Hepatitis B virus genotype A2 subtype adw2 (strain Rutter 1979) (HBV-A).